A 243-amino-acid chain; its full sequence is Terpene cyclase dpasB (243 aa).

The next 7 membrane-spanning stretches (helical) occupy residues 16 to 36 (VVWV…SNYI), 50 to 70 (MALM…FIYP), 79 to 99 (IHTL…RYGA), 112 to 132 (LPVI…AFAE), 141 to 161 (AVSG…QLLC), 172 to 189 (LWLA…PNML), and 207 to 227 (IWFL…LWYV).

Belongs to the paxB family.

Its subcellular location is the membrane. Its pathway is secondary metabolite biosynthesis; terpenoid biosynthesis. Its function is as follows. Terpene cyclase; part of the gene cluster that mediates the biosynthesis of the diterpenoid pyrones subglutinols A and B. The first step of the pathway is the synthesis of the alpha-pyrone moiety by the polyketide synthase dpasA via condensation of one acetyl-CoA starter unit with 3 malonyl-CoA units and 2 methylations. The alpha-pyrone is then combined with geranylgeranyl pyrophosphate (GGPP) formed by the GGPP synthase dpasD through the action of the prenyltransferase dpasC to yield a linear alpha-pyrone diterpenoid. Subsequent steps in the diterpenoid pyrone biosynthetic pathway involve the decalin core formation, which is initiated by the epoxidation of the C10-C11 olefin by the FAD-dependent oxidoreductase dpasE, and is followed by a cyclization cascade catalyzed by the terpene cyclase dpasB. The FAD-linked oxidoreductase dpasF is then involved in tetrahydrofuran (THF) ring formation at the C5 unit to complete the formation of subglutinols A and B. DpasF possesses also an additional catalytic ability of multi-step oxidations to generate a new DDP analog with an enone system at the C5 named FDDP A. This Apiospora sacchari (Arthrinium sacchari) protein is Terpene cyclase dpasB.